Reading from the N-terminus, the 188-residue chain is Molybdopterin synthase catalytic subunit (188 aa).

Phosphoserine is present on S20. Substrate-binding positions include 143-144, K159, and 166-168; these read HR and KKE.

The protein belongs to the MoaE family. MOCS2B subfamily. In terms of assembly, heterotetramer; composed of 2 small (MOCS2A) and 2 large (MOCS2B) subunits. As to expression, highest levels are found in heart and skeletal muscle. Lower levels are present in brain, kidney and pancreas. Very low levels are found in lung and peripheral blood leukocytes.

The protein localises to the cytoplasm. It is found in the cytosol. The catalysed reaction is 2 [molybdopterin-synthase sulfur-carrier protein]-C-terminal-Gly-aminoethanethioate + cyclic pyranopterin phosphate + H2O = molybdopterin + 2 [molybdopterin-synthase sulfur-carrier protein]-C-terminal Gly-Gly + 2 H(+). It participates in cofactor biosynthesis; molybdopterin biosynthesis. In terms of biological role, catalytic subunit of the molybdopterin synthase complex, a complex that catalyzes the conversion of precursor Z into molybdopterin. Acts by mediating the incorporation of 2 sulfur atoms from thiocarboxylated MOCS2A into precursor Z to generate a dithiolene group. The sequence is that of Molybdopterin synthase catalytic subunit from Homo sapiens (Human).